We begin with the raw amino-acid sequence, 351 residues long: Uroporphyrinogen decarboxylase (351 aa).

Substrate-binding positions include 32–36, F51, D82, Y157, S211, and H326; that span reads RQAGR.

This sequence belongs to the uroporphyrinogen decarboxylase family. As to quaternary structure, homodimer.

The protein localises to the cytoplasm. It carries out the reaction uroporphyrinogen III + 4 H(+) = coproporphyrinogen III + 4 CO2. Its pathway is porphyrin-containing compound metabolism; protoporphyrin-IX biosynthesis; coproporphyrinogen-III from 5-aminolevulinate: step 4/4. Catalyzes the decarboxylation of four acetate groups of uroporphyrinogen III to yield coproporphyrinogen III. This is Uroporphyrinogen decarboxylase from Caulobacter vibrioides (strain ATCC 19089 / CIP 103742 / CB 15) (Caulobacter crescentus).